A 327-amino-acid chain; its full sequence is MCSVKPKYISLPEQNSLCSLPNSGCCQVEVKIGRSKWEQQKAILVKVDGEPAGKIFIYSQPLIGQMYPLHELKSMGVICEKAGDFLVNLVTERGLKLTFKPIGSTANCFVTALVSGNFTSLTHETHIKTPLQNQEATTSPTIESDLTDKPDTNVYTGSREGYVAPSEKGSNEKKKEVVPNGGDKSVENKKGSDRNVKKTPSKTVTKPLLSESRKRKEAKTLATTQSQDLPAPTKDEPERTNSEPDNGEQEKIKKEKKKGTETSLKDGKNKLNEKIVKPAPTTTPDAGNGGLTPGKEDNKKTVTTSSVEIEVPEKKKAVENAGIIKIS.

Residues 129–306 (TPLQNQEATT…DNKKTVTTSS (178 aa)) are disordered. The segment covering 130 to 144 (PLQNQEATTSPTIES) has biased composition (polar residues). Composition is skewed to basic and acidic residues over residues 184-196 (KSVENKKGSDRNV) and 233-276 (TKDE…EKIV).

This is an uncharacterized protein from Caenorhabditis elegans.